The primary structure comprises 711 residues: Ferric reductase transmembrane component 3 (711 aa).

A signal peptide spans 1–20; it reads MYWVLLCGSILLCCLSGASA. The Extracellular segment spans residues 21-166; it reads SPAKTKMYGK…YANYDIGHTY (146 aa). N-linked (GlcNAc...) asparagine glycans are attached at residues Asn85, Asn108, Asn120, and Asn134. A helical membrane pass occupies residues 167 to 187; the sequence is GGIICAYFVGVMILASILHYL. Residues 188 to 237 lie on the Cytoplasmic side of the membrane; that stretch reads SYTPFKTALFKQRLVRYVRRYLTIPTIWGKHASSFSYLKIFTGFLPTRSE. A helical membrane pass occupies residues 238–258; sequence GVIILGYLVLHTVFLAYGYQY. At 259–280 the chain is on the extracellular side; sequence DPYNLIFDSRREQIARYVADRS. The region spanning 280 to 414 is the Ferric oxidoreductase domain; it reads SGVLAFAHFP…SGIEWIYAAI (135 aa). The helical transmembrane segment at 281–301 threads the bilayer; it reads GVLAFAHFPLIALFAGRNNFL. Over 302–321 the chain is Cytoplasmic; that stretch reads EFISGVKYTSFIMFHKWLGR. Positions 316 and 330 each coordinate heme. The helical transmembrane segment at 322-341 threads the bilayer; that stretch reads MMFLDAVIHGAAYTSYSVFY. Residues 342–353 lie on the Extracellular side of the membrane; that stretch reads KDWAASKEETYW. Residues 354–374 traverse the membrane as a helical segment; the sequence is QFGVAALCIVGVMVFFSLAMF. Residues 375-376 lie on the Cytoplasmic side of the membrane; that stretch reads RK. The chain crosses the membrane as a helical span at residues 377-397; that stretch reads FFYEAFLFLHIVLGALFFYTC. His386 is a binding site for heme. A topological domain (extracellular) is located at residue Trp398. Residues 399–419 form a helical membrane-spanning segment; it reads EHVVELSGIEWIYAAIAIWTI. His400 is a binding site for heme. Residues 415-534 form the FAD-binding FR-type domain; it reads AIWTIDRLIR…EGPYGSSSPV (120 aa). The Cytoplasmic portion of the chain corresponds to 420-711; that stretch reads DRLIRIVRVS…IEYFEEYQSW (292 aa). 479–485 contributes to the FAD binding site; it reads HPFTVLD. Residues 526–529 and 677–678 contribute to the NADP(+) site; these read GPYG and CG.

This sequence belongs to the ferric reductase (FRE) family. The cofactor is FAD. Heme serves as cofactor.

It is found in the cell membrane. It carries out the reaction 2 a Fe(II)-siderophore + NADP(+) + H(+) = 2 a Fe(III)-siderophore + NADPH. Siderophore-iron reductase responsible for reducing extracellular iron prior to import. Catalyzes the reductive uptake of Fe(3+) bound to di- and trihydroxamate siderophores. Fe(3+) is reduced to Fe(2+), which then dissociates from the siderophore and can be imported by the high-affinity Fe(2+) transport complex in the plasma membrane. In Saccharomyces cerevisiae (strain ATCC 204508 / S288c) (Baker's yeast), this protein is Ferric reductase transmembrane component 3 (FRE3).